Consider the following 393-residue polypeptide: Pre-mRNA splicing factor SR-like 1 (393 aa).

Positions 173–393 are disordered; sequence MNLPTKPSGS…VIKLGGSSWR (221 aa). The span at 249–312 shows a compositional bias: basic and acidic residues; sequence QSRDYYSDRD…RNDYEDDRSR (64 aa). Residues 301 to 308 carry the Nuclear localization signal motif; that stretch reads SRRNDYED. Over residues 313–325 the composition is skewed to basic residues; it reads HDRRSRSRSRSRS. Basic and acidic residues-rich tracts occupy residues 329-346 and 356-385; these read QIER…KEKS and KLKD…EEVI.

Belongs to the PRP38 family. Phosphorylated. In terms of tissue distribution, mostly expressed in siliques and leaves, also present in seedlings, flowers and stems, and, at low levels, in roots.

Its subcellular location is the nucleus. May be required for pre-mRNA splicing. Confers salt tolerance to LiCl and NaCl. This chain is Pre-mRNA splicing factor SR-like 1, found in Arabidopsis thaliana (Mouse-ear cress).